Reading from the N-terminus, the 831-residue chain is Cation/H(+) symporter 13 (831 aa).

12 consecutive transmembrane segments (helical) span residues 50–70 (YALP…RLIF), 89–109 (VVLG…FLPA), 112–132 (KIII…LLGL), 147–167 (ILIG…TIMF), 214–234 (LATH…LAFN), 250–270 (MIIG…VWLT), 282–302 (VVPF…GEAM), 303–323 (GVHA…GPPL), 334–354 (FASN…TNFF), 364–384 (VVMI…GTAA), 397–417 (LCLA…TIVW), and 430–450 (LVII…VYLY).

This sequence belongs to the monovalent cation:proton antiporter 2 (CPA2) transporter (TC 2.A.37) family. CHX (TC 2.A.37.4) subfamily. As to expression, preferentially expressed in pollen before and after germination. Detected in pollen grains within anthers of the flower buds or in pollen on fully open flowers and on the stigma, and in pollen tubes growing in the style. Weakly expressed in roots.

Its subcellular location is the cell membrane. High-affinity potassium transporter that plays a role in K(+) acquisition. May operate as a K(+)/H(+) symporter. The chain is Cation/H(+) symporter 13 (CHX13) from Arabidopsis thaliana (Mouse-ear cress).